Consider the following 317-residue polypeptide: Dehydrogenase/reductase SDR family protein 7-like (317 aa).

Residues 1–10 (MKNLAERSAG) are Cytoplasmic-facing. A helical; Signal-anchor for type II membrane protein membrane pass occupies residues 11-31 (SLYWWLLATLFLPIAIPGLVL). Over 32-317 (KLLTMMKEQR…KKRAEKLNST (286 aa)) the chain is Peroxisomal. 52-76 (LITGASSGLGEALAHSFFLAGCKVV) provides a ligand contact to NAD(+). S189 is a substrate binding site. The Proton acceptor role is filled by Y202.

It belongs to the short-chain dehydrogenases/reductases (SDR) family.

It localises to the peroxisome membrane. Functionally, putative oxidoreductase. The sequence is that of Dehydrogenase/reductase SDR family protein 7-like from Anopheles gambiae (African malaria mosquito).